Here is a 584-residue protein sequence, read N- to C-terminus: Transcription factor COE1 (584 aa).

Residue M1 is modified to N-acetylmethionine. Residues 1-14 (MFGIQESIQRSGSS) show a composition bias toward polar residues. Positions 1–21 (MFGIQESIQRSGSSMKEEPLG) are disordered. A Glycyl lysine isopeptide (Lys-Gly) (interchain with G-Cter in SUMO1); alternate cross-link involves residue K16. K16 is covalently cross-linked (Glycyl lysine isopeptide (Lys-Gly) (interchain with G-Cter in SUMO2); alternate). The tract at residues 63 to 66 (RKSN) is interaction with DNA. The C5-type zinc-finger motif lies at 151–170 (CRVLLTHEIMCSRCCDKKSC). 2 interaction with DNA regions span residues 197–204 (NCLKNAGN) and 236–239 (NNSK). Positions 255 to 338 (PCIKAISPSE…KGTPGRFIYT (84 aa)) constitute an IPT/TIG domain. The interval 450 to 473 (GFTRNSSSVSPHGYVPSTTPQQTN) is disordered.

Belongs to the COE family. In terms of assembly, homodimer. Interacts with ZNF423 and ZNF521, leading to prevent EBF1 to bind DNA and activate target genes. Interacts with CCR4-NOT component CNOT3. In terms of tissue distribution, expressed exclusively in olfactory receptor neurons and their precursors.

It localises to the nucleus. In terms of biological role, key pioneer transcription factor of B-cell specification and commitment. Recognizes variations of the palindromic sequence 5'-ATTCCCNNGGGAATT-3'. Operates in a transcription factor network to activate B-cell-specific genes and repress genes associated with alternative cell fates. For instance, positively regulates many B-cell specific genes including BCR or CD40 while repressing genes that direct cells into alternative lineages, including GATA3 and TCF7 for the T-cell lineage. In addition to its role during lymphopoiesis, controls the thermogenic gene program in adipocytes during development and in response to environmental cold. In Rattus norvegicus (Rat), this protein is Transcription factor COE1 (Ebf1).